The following is a 371-amino-acid chain: Anhydro-N-acetylmuramic acid kinase (371 aa).

Residue 12-20 participates in ATP binding; the sequence is GTVLDGNID.

It belongs to the anhydro-N-acetylmuramic acid kinase family.

The enzyme catalyses 1,6-anhydro-N-acetyl-beta-muramate + ATP + H2O = N-acetyl-D-muramate 6-phosphate + ADP + H(+). The protein operates within amino-sugar metabolism; 1,6-anhydro-N-acetylmuramate degradation. It functions in the pathway cell wall biogenesis; peptidoglycan recycling. Its function is as follows. Catalyzes the specific phosphorylation of 1,6-anhydro-N-acetylmuramic acid (anhMurNAc) with the simultaneous cleavage of the 1,6-anhydro ring, generating MurNAc-6-P. Is required for the utilization of anhMurNAc either imported from the medium or derived from its own cell wall murein, and thus plays a role in cell wall recycling. This chain is Anhydro-N-acetylmuramic acid kinase, found in Brucella anthropi (strain ATCC 49188 / DSM 6882 / CCUG 24695 / JCM 21032 / LMG 3331 / NBRC 15819 / NCTC 12168 / Alc 37) (Ochrobactrum anthropi).